We begin with the raw amino-acid sequence, 240 residues long: Phosphoribosylaminoimidazole-succinocarboxamide synthase (240 aa).

Belongs to the SAICAR synthetase family.

The enzyme catalyses 5-amino-1-(5-phospho-D-ribosyl)imidazole-4-carboxylate + L-aspartate + ATP = (2S)-2-[5-amino-1-(5-phospho-beta-D-ribosyl)imidazole-4-carboxamido]succinate + ADP + phosphate + 2 H(+). The protein operates within purine metabolism; IMP biosynthesis via de novo pathway; 5-amino-1-(5-phospho-D-ribosyl)imidazole-4-carboxamide from 5-amino-1-(5-phospho-D-ribosyl)imidazole-4-carboxylate: step 1/2. The polypeptide is Phosphoribosylaminoimidazole-succinocarboxamide synthase (Wolbachia sp. subsp. Drosophila simulans (strain wRi)).